The primary structure comprises 212 residues: Protein-L-isoaspartate O-methyltransferase (212 aa).

Serine 62 is an active-site residue.

This sequence belongs to the methyltransferase superfamily. L-isoaspartyl/D-aspartyl protein methyltransferase family.

The protein resides in the cytoplasm. The catalysed reaction is [protein]-L-isoaspartate + S-adenosyl-L-methionine = [protein]-L-isoaspartate alpha-methyl ester + S-adenosyl-L-homocysteine. In terms of biological role, catalyzes the methyl esterification of L-isoaspartyl residues in peptides and proteins that result from spontaneous decomposition of normal L-aspartyl and L-asparaginyl residues. It plays a role in the repair and/or degradation of damaged proteins. The chain is Protein-L-isoaspartate O-methyltransferase from Pseudoalteromonas translucida (strain TAC 125).